The following is a 215-amino-acid chain: Pyrrolidone-carboxylate peptidase (215 aa).

Active-site residues include glutamate 80, cysteine 143, and histidine 167.

Belongs to the peptidase C15 family. In terms of assembly, homotetramer.

Its subcellular location is the cytoplasm. The enzyme catalyses Release of an N-terminal pyroglutamyl group from a polypeptide, the second amino acid generally not being Pro.. Removes 5-oxoproline from various penultimate amino acid residues except L-proline. This is Pyrrolidone-carboxylate peptidase from Bacillus thuringiensis subsp. konkukian (strain 97-27).